Reading from the N-terminus, the 60-residue chain is Photosystem II reaction center protein L (60 aa).

Residues 39 to 59 (SLYWGLLLIFVLAVLFSSYIF) traverse the membrane as a helical segment.

It belongs to the PsbL family. In terms of assembly, PSII is composed of 1 copy each of membrane proteins PsbA, PsbB, PsbC, PsbD, PsbE, PsbF, PsbH, PsbI, PsbJ, PsbK, PsbL, PsbM, PsbT, PsbX, PsbY, PsbZ, Psb30/Ycf12, at least 3 peripheral proteins of the oxygen-evolving complex and a large number of cofactors. It forms dimeric complexes.

Its subcellular location is the plastid. The protein resides in the chloroplast thylakoid membrane. In terms of biological role, one of the components of the core complex of photosystem II (PSII). PSII is a light-driven water:plastoquinone oxidoreductase that uses light energy to abstract electrons from H(2)O, generating O(2) and a proton gradient subsequently used for ATP formation. It consists of a core antenna complex that captures photons, and an electron transfer chain that converts photonic excitation into a charge separation. This subunit is found at the monomer-monomer interface and is required for correct PSII assembly and/or dimerization. The polypeptide is Photosystem II reaction center protein L (Oedogonium cardiacum (Filamentous green alga)).